A 355-amino-acid chain; its full sequence is Isocitrate dehydrogenase [NAD] subunit gamma, mitochondrial (355 aa).

Residue Ile1 is a transit peptide, mitochondrion. Residues Thr82 and Asn95 each contribute to the citrate site. Arg98, Arg129, and Asp216 together coordinate substrate. Asp216 is a binding site for Mn(2+). 3 residues coordinate ADP: Asn274, Thr275, and Asn286.

Belongs to the isocitrate and isopropylmalate dehydrogenases family. Heterooligomer of subunits alpha (IDH3A), beta (IDH3B), and gamma (IDH3G) in the apparent ratio of 2:1:1. The heterodimer containing one IDH3A and one IDH3B subunit and the heterodimer containing one IDH3A and one IDH3G subunit assemble into a heterotetramer (which contains two subunits of IDH3A, one of IDH3B and one of IDH3G) and further into the heterooctamer. The cofactor is Mg(2+). Mn(2+) is required as a cofactor.

It localises to the mitochondrion. With respect to regulation, the heterotetramer and the heterodimer composed of IDH3A and IDH3G subunits can be allosterically activated by citrate (CIT) or/and ADP, and the two activators can act independently or synergistically. The heterodimer composed of IDH3A and IDH3B subunits cannot be allosterically regulated and the allosteric regulation of the heterotetramer is through the IDH3G subunit and not the IDH3B subunit. The IDH3G subunit contains the allosteric site which consists of a CIT-binding site and an ADP-binding site, and the binding of CIT and ADP causes conformational changes at the allosteric site which are transmitted to the active site in the catalytic subunit (IDH3A) through a cascade of conformational changes at the heterodimer interface, leading to stabilization of the isocitrate-binding at the active site and thus activation of the enzyme. ATP can activate the heterotetramer and the heterodimer composed of IDH3A and IDH3G subunits at low concentrations but inhibits their activities at high concentrations, whereas ATP exhibits only inhibitory effect on the heterodimer composed of IDH3A and IDH3B subunits. Regulatory subunit which plays a role in the allosteric regulation of the enzyme catalyzing the decarboxylation of isocitrate (ICT) into alpha-ketoglutarate. The heterodimer composed of the alpha (IDH3A) and beta (IDH3B) subunits and the heterodimer composed of the alpha (IDH3A) and gamma (IDH3G) subunits, have considerable basal activity but the full activity of the heterotetramer (containing two subunits of IDH3A, one of IDH3B and one of IDH3G) requires the assembly and cooperative function of both heterodimers. The polypeptide is Isocitrate dehydrogenase [NAD] subunit gamma, mitochondrial (IDH3G) (Macaca fascicularis (Crab-eating macaque)).